We begin with the raw amino-acid sequence, 145 residues long: MGKGKPRGLNAARKLSNHRREQRWADLHYKKRLLGTAFKSSPFGGASHAKGIVLEKVGVEAKQPNSAIRKCVKVQLIKNGKKVTAFVPNDGCLNFIDENDEVLLAGFGRKGKAKGDIPGVRFKVVKVSGVGLLALWKEKKEKPRS.

P64 is subject to Hydroxyproline.

Belongs to the universal ribosomal protein uS12 family.

The protein is Small ribosomal subunit protein uS12 (rps23) of Aspergillus fumigatus (strain ATCC MYA-4609 / CBS 101355 / FGSC A1100 / Af293) (Neosartorya fumigata).